The sequence spans 99 residues: Aspartyl/glutamyl-tRNA(Asn/Gln) amidotransferase subunit C (99 aa).

It belongs to the GatC family. As to quaternary structure, heterotrimer of A, B and C subunits.

The catalysed reaction is L-glutamyl-tRNA(Gln) + L-glutamine + ATP + H2O = L-glutaminyl-tRNA(Gln) + L-glutamate + ADP + phosphate + H(+). It catalyses the reaction L-aspartyl-tRNA(Asn) + L-glutamine + ATP + H2O = L-asparaginyl-tRNA(Asn) + L-glutamate + ADP + phosphate + 2 H(+). In terms of biological role, allows the formation of correctly charged Asn-tRNA(Asn) or Gln-tRNA(Gln) through the transamidation of misacylated Asp-tRNA(Asn) or Glu-tRNA(Gln) in organisms which lack either or both of asparaginyl-tRNA or glutaminyl-tRNA synthetases. The reaction takes place in the presence of glutamine and ATP through an activated phospho-Asp-tRNA(Asn) or phospho-Glu-tRNA(Gln). The chain is Aspartyl/glutamyl-tRNA(Asn/Gln) amidotransferase subunit C from Paraburkholderia xenovorans (strain LB400).